The sequence spans 432 residues: Adenylosuccinate synthetase (432 aa).

GTP contacts are provided by residues 13–19 (GDEGKGK) and 41–43 (GHT). Asp14 serves as the catalytic Proton acceptor. Asp14 and Gly41 together coordinate Mg(2+). IMP-binding positions include 14–17 (DEGK), 39–42 (NAGH), Thr130, Arg144, Gln225, Thr240, and Arg304. Catalysis depends on His42, which acts as the Proton donor. 300 to 306 (AVTGRPR) provides a ligand contact to substrate. GTP contacts are provided by residues Arg306, 332-334 (KLD), and 415-417 (STG).

This sequence belongs to the adenylosuccinate synthetase family. In terms of assembly, homodimer. Requires Mg(2+) as cofactor.

The protein resides in the cytoplasm. It catalyses the reaction IMP + L-aspartate + GTP = N(6)-(1,2-dicarboxyethyl)-AMP + GDP + phosphate + 2 H(+). The protein operates within purine metabolism; AMP biosynthesis via de novo pathway; AMP from IMP: step 1/2. Its function is as follows. Plays an important role in the de novo pathway of purine nucleotide biosynthesis. Catalyzes the first committed step in the biosynthesis of AMP from IMP. The chain is Adenylosuccinate synthetase from Pasteurella multocida (strain Pm70).